We begin with the raw amino-acid sequence, 326 residues long: N-(2-amino-2-carboxyethyl)-L-glutamate synthase (326 aa).

Lys47 bears the N6-(pyridoxal phosphate)lysine mark. Pyridoxal 5'-phosphate-binding positions include Asn77, Ser185–Ser189, and Ser272.

This sequence belongs to the cysteine synthase/cystathionine beta-synthase family. SbnA subfamily. Homodimer. Pyridoxal 5'-phosphate serves as cofactor.

The catalysed reaction is O-phospho-L-serine + L-glutamate = N-[(2S)-2-amino-2-carboxyethyl]-L-glutamate + phosphate + H(+). It participates in siderophore biosynthesis. In terms of biological role, catalyzes the synthesis of N-((2S)-2-amino-2-carboxyethyl)-L-glutamate (ACEGA) from O-phospho-L-serine and L-glutamate. Involved in the biosynthesis of L-2,3-diaminopropionic acid (L-Dap), a precursor of staphyloferrin B and antibiotics. This chain is N-(2-amino-2-carboxyethyl)-L-glutamate synthase (sbnA), found in Staphylococcus aureus (strain N315).